The sequence spans 211 residues: Large ribosomal subunit protein uL4 (211 aa).

Residues 63-94 (RFGRQKGGGTARHGARSAPQFVGGGKAHGPRV) form a disordered region.

The protein belongs to the universal ribosomal protein uL4 family. In terms of assembly, part of the 50S ribosomal subunit.

Functionally, one of the primary rRNA binding proteins, this protein initially binds near the 5'-end of the 23S rRNA. It is important during the early stages of 50S assembly. It makes multiple contacts with different domains of the 23S rRNA in the assembled 50S subunit and ribosome. In terms of biological role, forms part of the polypeptide exit tunnel. This chain is Large ribosomal subunit protein uL4, found in Maricaulis maris (strain MCS10) (Caulobacter maris).